The chain runs to 321 residues: Fe-S cluster assembly protein DRE2 (321 aa).

An N-terminal SAM-like domain region spans residues 1–131 (MERMLLLSPP…KPDFGPENIV (131 aa)). Residues 132–213 (PLKLGKRKPV…EETLLDGEDM (82 aa)) are linker. Positions 223, 234, 237, and 239 each coordinate [2Fe-2S] cluster. Residues 223-239 (CRPKAGKRRRACKDCTC) form a fe-S binding site A region. Positions 284, 287, 295, and 298 each coordinate [4Fe-4S] cluster. Short sequence motifs (cx2C motif) lie at residues 284–287 (CGNC) and 295–298 (CDGC). A fe-S binding site B region spans residues 284-298 (CGNCALGDAFRCDGC).

This sequence belongs to the anamorsin family. As to quaternary structure, monomer. Interacts with TAH18. Interacts with MIA40. The cofactor is [2Fe-2S] cluster. Requires [4Fe-4S] cluster as cofactor.

The protein resides in the cytoplasm. It is found in the mitochondrion intermembrane space. Functionally, component of the cytosolic iron-sulfur (Fe-S) protein assembly (CIA) machinery required for the maturation of extramitochondrial Fe-S proteins. Part of an electron transfer chain functioning in an early step of cytosolic Fe-S biogenesis, facilitating the de novo assembly of a [4Fe-4S] cluster on the scaffold complex CFD1-NBP35. Electrons are transferred to DRE2 from NADPH via the FAD- and FMN-containing protein TAH18. TAH18-DRE2 are also required for the assembly of the diferric tyrosyl radical cofactor of ribonucleotide reductase (RNR), probably by providing electrons for reduction during radical cofactor maturation in the catalytic small subunit RNR2. The chain is Fe-S cluster assembly protein DRE2 from Coccidioides posadasii (strain C735) (Valley fever fungus).